The primary structure comprises 476 residues: Aspartate kinase Ask_Ect (476 aa).

Residues 405–476 (SAIGSDLKVK…ENHGDVIAAA (72 aa)) enclose the ACT domain.

It belongs to the aspartokinase family. As to quaternary structure, monomer.

The protein localises to the cytoplasm. It catalyses the reaction L-aspartate + ATP = 4-phospho-L-aspartate + ADP. It participates in amine and polyamine biosynthesis; ectoine biosynthesis. With respect to regulation, allosterically and strongly feedback inhibited by tryptophan. The presence of either 650 mM NaCl or KCl reduces the inhibition by tryptophan. Functionally, involved in the biosynthesis of L-aspartate-beta-semialdehyde, which is an intermediate in the biosynthesis of ectoine, a highly soluble organic osmolyte, called compatible solute. Ectoine is used to avoid excessive water efflux, plasmolysis, molecular crowding of the cytoplasm, and cessation of growth in high salinity environments. Catalyzes the phosphorylation of the beta-carboxyl group of L-aspartate to yield 4-phospho-L-aspartate. The polypeptide is Aspartate kinase Ask_Ect (ask) (Stutzerimonas stutzeri (strain A1501) (Pseudomonas stutzeri)).